Consider the following 322-residue polypeptide: Tetraacyldisaccharide 4'-kinase (322 aa).

54-61 (SVGGTGKT) contacts ATP.

This sequence belongs to the LpxK family.

It catalyses the reaction a lipid A disaccharide + ATP = a lipid IVA + ADP + H(+). The protein operates within glycolipid biosynthesis; lipid IV(A) biosynthesis; lipid IV(A) from (3R)-3-hydroxytetradecanoyl-[acyl-carrier-protein] and UDP-N-acetyl-alpha-D-glucosamine: step 6/6. In terms of biological role, transfers the gamma-phosphate of ATP to the 4'-position of a tetraacyldisaccharide 1-phosphate intermediate (termed DS-1-P) to form tetraacyldisaccharide 1,4'-bis-phosphate (lipid IVA). This chain is Tetraacyldisaccharide 4'-kinase, found in Francisella tularensis subsp. holarctica (strain FTNF002-00 / FTA).